The sequence spans 346 residues: Tetraacyldisaccharide 4'-kinase (346 aa).

Position 54 to 61 (54 to 61) interacts with ATP; sequence TVGGAGKT.

Belongs to the LpxK family.

It carries out the reaction a lipid A disaccharide + ATP = a lipid IVA + ADP + H(+). Its pathway is glycolipid biosynthesis; lipid IV(A) biosynthesis; lipid IV(A) from (3R)-3-hydroxytetradecanoyl-[acyl-carrier-protein] and UDP-N-acetyl-alpha-D-glucosamine: step 6/6. Transfers the gamma-phosphate of ATP to the 4'-position of a tetraacyldisaccharide 1-phosphate intermediate (termed DS-1-P) to form tetraacyldisaccharide 1,4'-bis-phosphate (lipid IVA). The chain is Tetraacyldisaccharide 4'-kinase from Rhizobium meliloti (strain 1021) (Ensifer meliloti).